The primary structure comprises 230 residues: Calcyclin-binding protein (230 aa).

The interval 1–82 (MSSALEELQK…YTVKISNYGW (82 aa)) is interaction with SIAH1. Ser3 is modified (phosphoserine). 2 positions are modified to N6-acetyllysine: Lys10 and Lys21. Ser36 is subject to Phosphoserine. A disordered region spans residues 38 to 59 (IETEMKNKMQQKSQRKAELTEN). The 95-residue stretch at 75 to 169 (VKISNYGWDQ…AENTRWDYLT (95 aa)) folds into the CS domain. Residues 75–230 (VKISNYGWDQ…EKQAKGDTDF (156 aa)) are interaction with SKP1. N6-acetyllysine occurs at positions 87 and 120. The interaction with S100A6 stretch occupies residues 156–230 (CRKKAENTRW…EKQAKGDTDF (75 aa)). Residues 170–230 (QVEKECKEKE…EKQAKGDTDF (61 aa)) form the SGS domain.

In terms of assembly, monomer or homodimer. Component of some large E3 complex at least composed of UBE2D1, SIAH1, CACYBP/SIP, SKP1, APC and TBL1X. Interacts directly with SIAH1, SIAH2 and SKP1. Interacts with proteins of the S100 family S100A1, S100A6, S100B, S100P and S100A12 in a calcium-dependent manner. Phosphorylated on serine residues. Phosphorylated upon induction by RA or at high calcium concentrations.

It is found in the nucleus. The protein resides in the cytoplasm. Functionally, may be involved in calcium-dependent ubiquitination and subsequent proteasomal degradation of target proteins. Probably serves as a molecular bridge in ubiquitin E3 complexes. Participates in the ubiquitin-mediated degradation of beta-catenin (CTNNB1). In Bos taurus (Bovine), this protein is Calcyclin-binding protein (CACYBP).